A 112-amino-acid polypeptide reads, in one-letter code: MSTFAEAPAGDLARGEKIFKTKCAQCHVAEKGGGHKQGPNLGGLFGRVSGTAAGFAYSKANKEAAVTWGESTLYEYLLNPKKYMPGNKMVFAGLKKPEERADLIAYLKQATA.

Heme c-binding residues include cysteine 23, cysteine 26, histidine 27, and methionine 89.

This sequence belongs to the cytochrome c family. Post-translationally, binds 1 heme c group covalently per subunit.

It is found in the mitochondrion intermembrane space. Its function is as follows. Electron carrier protein. The oxidized form of the cytochrome c heme group can accept an electron from the heme group of the cytochrome c1 subunit of cytochrome reductase. Cytochrome c then transfers this electron to the cytochrome oxidase complex, the final protein carrier in the mitochondrial electron-transport chain. This is Cytochrome c (CYC1) from Chlamydomonas reinhardtii (Chlamydomonas smithii).